The sequence spans 1228 residues: DNA repair protein rad5 (1228 aa).

Disordered regions lie at residues 1 to 96 (MDRH…GTLT), 194 to 242 (PPVR…VLPS), 280 to 302 (QPPT…PRVS), and 445 to 474 (KAMD…QELE). Residues 34–43 (PSSSPQFSAP) show a composition bias toward low complexity. Residues 70–83 (HNDDDDDDDDDDDE) are compositionally biased toward acidic residues. Over residues 211 to 237 (PKKSSTSQARSRSHAQAQPQPQSNTPT) the composition is skewed to polar residues. Positions 445 to 454 (KAMDKAKAGD) are enriched in basic and acidic residues. The segment covering 465 to 474 (EEAEEGQELE) has biased composition (acidic residues). The Helicase ATP-binding domain maps to 574-784 (PKQEQHCLGG…FSLVRFLRVE (211 aa)). 587–594 (DEMGLGKT) lines the ATP pocket. The DEAH box motif lies at 735–738 (DEAH). The RING-type zinc finger occupies 967–1012 (CPICAEEPMIDQAVTGCWHSACKKCLLDYIKHQTDRNEVPRCFQCR). The Helicase C-terminal domain maps to 1060–1216 (ALISHLRTLR…MMSDEEKKMQ (157 aa)).

Belongs to the SNF2/RAD54 helicase family.

The protein localises to the cytoplasm. It is found in the nucleus. In terms of biological role, probable helicase, member of the UBC2/RAD6 epistasis group. Functions with DNA repair protein uvs-2/rad18 in error-free postreplication DNA repair. Involved in the maintenance of wild-type rates of instability of simple repetitive sequences such as poly(GT) repeats. Seems to be involved in maintaining a balance which acts in favor of error-prone non-homologous joining during DNA double-strand breaks repairs. This is DNA repair protein rad5 (mus-41) from Neurospora crassa (strain ATCC 24698 / 74-OR23-1A / CBS 708.71 / DSM 1257 / FGSC 987).